We begin with the raw amino-acid sequence, 62 residues long: MGSGTATFGKRNSTPTHIRCRRCGRVSYNVKKGYCAACGFGRSRRLRKYRWSKKWKKKKNAH.

Residues C20, C23, C35, and C38 each coordinate Zn(2+). The segment at 20-38 (CRRCGRVSYNVKKGYCAAC) adopts a C4-type zinc-finger fold.

The protein belongs to the eukaryotic ribosomal protein eL37 family. Part of the 50S ribosomal subunit. Requires Zn(2+) as cofactor.

Binds to the 23S rRNA. This chain is Large ribosomal subunit protein eL37, found in Pyrococcus furiosus (strain ATCC 43587 / DSM 3638 / JCM 8422 / Vc1).